A 349-amino-acid polypeptide reads, in one-letter code: Hydroxymethylglutaryl-CoA synthase (349 aa).

Residues D30 and A31 each coordinate (3S)-3-hydroxy-3-methylglutaryl-CoA. E82 functions as the Proton donor/acceptor in the catalytic mechanism. C114 and T155 together coordinate (3S)-3-hydroxy-3-methylglutaryl-CoA. The Acyl-thioester intermediate role is filled by C114. R203 contributes to the CoA binding site. Positions 205 and 238 each coordinate (3S)-3-hydroxy-3-methylglutaryl-CoA. H238 serves as the catalytic Proton donor/acceptor. CoA is bound at residue K243. The (3S)-3-hydroxy-3-methylglutaryl-CoA site is built by N270 and S300.

It belongs to the thiolase-like superfamily. Archaeal HMG-CoA synthase family. In terms of assembly, interacts with acetoacetyl-CoA thiolase that catalyzes the precedent step in the pathway and with a DUF35 protein. The acetoacetyl-CoA thiolase/HMG-CoA synthase complex channels the intermediate via a fused CoA-binding site, which allows for efficient coupling of the endergonic thiolase reaction with the exergonic HMGCS reaction.

It catalyses the reaction acetoacetyl-CoA + acetyl-CoA + H2O = (3S)-3-hydroxy-3-methylglutaryl-CoA + CoA + H(+). Its pathway is metabolic intermediate biosynthesis; (R)-mevalonate biosynthesis; (R)-mevalonate from acetyl-CoA: step 2/3. In terms of biological role, catalyzes the condensation of acetyl-CoA with acetoacetyl-CoA to form 3-hydroxy-3-methylglutaryl-CoA (HMG-CoA). Functions in the mevalonate (MVA) pathway leading to isopentenyl diphosphate (IPP), a key precursor for the biosynthesis of isoprenoid compounds that are building blocks of archaeal membrane lipids. This chain is Hydroxymethylglutaryl-CoA synthase, found in Methanococcus maripaludis (strain C5 / ATCC BAA-1333).